We begin with the raw amino-acid sequence, 732 residues long: Protein kinase YpkA (732 aa).

Positions 136–408 constitute a Protein kinase domain; the sequence is VAETDKFAEG…SNEARLHEFL (273 aa). ATP-binding positions include 142–150 and Lys163; that span reads FAEGESHIS. Asp270 (proton acceptor) is an active-site residue.

Belongs to the protein kinase superfamily. Ser/Thr protein kinase family.

The protein localises to the secreted. It catalyses the reaction L-seryl-[protein] + ATP = O-phospho-L-seryl-[protein] + ADP + H(+). The enzyme catalyses L-threonyl-[protein] + ATP = O-phospho-L-threonyl-[protein] + ADP + H(+). In terms of biological role, acts as a virulence determinant. The protein is Protein kinase YpkA (ypkA) of Yersinia pseudotuberculosis serotype I (strain IP32953).